The primary structure comprises 64 residues: UPF0434 protein Bcen_1934 (64 aa).

The protein belongs to the UPF0434 family.

The polypeptide is UPF0434 protein Bcen_1934 (Burkholderia orbicola (strain AU 1054)).